Consider the following 157-residue polypeptide: uncharacterized protein (157 aa).

The first 30 residues, 1–30, serve as a signal peptide directing secretion; it reads MLPEQGPQPSTMPLWCLLAACTSLPRQAAT.

Its subcellular location is the secreted. This is an uncharacterized protein from Homo sapiens (Human).